An 821-amino-acid chain; its full sequence is MPTRVCCCCSALRPRYKRLVDNIFPEDPKDGLVKTDMEKLTFYAVSAPEKLDRIGSYLAERLSRDVVRHRSGYVLIAMEALDQLLMACHSQSIKPFVESFLHMVAKLLESGEPKLQVLGTNSFVKFANIEEDTPSYHRRYDFFVSRFSAMCHSCHSDPEIRTEIRIAGIRGIQGVVRKTVNDELRATIWEPQHMDKIVPSLLFNMQKIEEVDSRIGPPSSPSATDKEENPAVLAENCFRELLGRATFGNMNNAVRPVFAHLDHHKLWDPNEFAVHCFKIIMYSIQAQYSHHVIQEILGHLDARKKDAPRVRAGIIQVLLEAVAIAAKGSIGPTVLEVFNTLLKHLRLSVEFEANDLQGGSVGSVNLNTSSKDNDEKIVQNAIIQTIGFFGSNLPDYQRSEIMMFIMGKVPVFGTSTHTLDISQLGDLGTRRIQIMLLRSLLMVTSGYKAKTIVTALPGSFLDPLLSPSLMEDYELRQLVLEVMHNLMDRHDNRAKLRGIRIIPDVADLKIKREKICRQDTSFMKKNGQQLYRHIYLGCKEEDNVQKNYELLYTSLALITIELANEEVVIDLIRLAIALQDSAIINEDNLPMFHRCGIMALVAAYLNFVSQMIAVPAFCQHVSKVIEIRTMEAPYFLPEHIFRDKCMLPKSLEKHEKDLYFLTNKIAESLGGSGYSVERLSVPYVPQVTDEDRLSRRKSIVDTVSIQVDILSNNVPSDDVVSNTEEITFEALKKAIDTSGMEEQEKEKRRLVIEKFQKAPFEEIAAQCESKANLLHDRLAQILELTIRPPPSPSGTLTITSGHAQYQSVPVYEMKFPDLCVY.

Phosphoserine is present on residues Ser-360, Ser-363, Ser-422, and Ser-694.

The protein belongs to the EFR3 family. As to quaternary structure, component of a phosphatidylinositol 4-kinase (PI4K) complex, composed of PI4KA, EFR3 (EFR3A or EFR3B), TTC7 (TTC7A or TTC7B) and HYCC (HYCC1 or HYCC2). Post-translationally, palmitoylated at its N-terminus, anchoring the protein to the plasma membrane.

The protein resides in the cell membrane. The protein localises to the cytoplasm. It localises to the cytosol. Component of a complex required to localize phosphatidylinositol 4-kinase (PI4K) to the plasma membrane. The complex acts as a regulator of phosphatidylinositol 4-phosphate (PtdIns(4)P) synthesis. In the complex, EFR3A probably acts as the membrane-anchoring component. Also involved in responsiveness to G-protein-coupled receptors; it is however unclear whether this role is direct or indirect. The chain is Protein EFR3 homolog A from Homo sapiens (Human).